A 538-amino-acid chain; its full sequence is MVAYRFLTLISLGLGSHCASALQYGYNQVSTHKDSAVVAGAFPAINGTHLQSPAFTSPGTVPRGFSDGTSGPTRDETMEGFMRRLARSNSWMTYHKADFKSEEGRKFPYMYLSASKSSIEKPSSHKLRVWLQGGVHGNEPAGDQSMLALLGDLAANQKWAAKLLEKMDILVLPRYNPDGVFYFQRYLATNFDPNRDHIKLARQQTRDIKELFARFSPHIATDMHEFTAGRAFGPKKDIIYAADALFSSAKNLNIDEGIRQLSEKLFAKRMGKDIEAAGLRWDPYIIQGESSSSKLLLREAGTDAKIGRNAMGLSQCVVFLCETRGIGIADQHFERRTLSGLVMVKSILQTAVDNFDEVYNTIERGIRRFTNSRNDIVLTDRSPIMERTFGMLNTTDATLFDYPIDFATTTPAQAVLTRSRPRAYLIPPSWPDIVKRLEVFGVKADKLPHSYVGPVEALNVTSVTFDKEYYEGVVTTTVETKLVERNIRLPAGSYLVKTNQKNAALAFVALEPENIDSFASFGVIPVSTGDQYPIFRVE.

An N-terminal signal peptide occupies residues 1-21 (MVAYRFLTLISLGLGSHCASA). An N-linked (GlcNAc...) asparagine glycan is attached at Asn-46. A disordered region spans residues 53–76 (PAFTSPGTVPRGFSDGTSGPTRDE). A Peptidase M14 domain is found at 71–351 (GPTRDETMEG…VMVKSILQTA (281 aa)). Residues His-136, Glu-139, and His-224 each contribute to the Zn(2+) site. Residue Glu-322 is the Proton donor/acceptor of the active site. N-linked (GlcNAc...) asparagine glycosylation is found at Asn-393 and Asn-459.

It belongs to the peptidase M14 family. Zn(2+) serves as cofactor.

It localises to the secreted. Extracellular metalloprotease that contributes to pathogenicity. This chain is Carboxypeptidase 2 (MCPB), found in Trichophyton tonsurans (Scalp ringworm fungus).